The following is a 153-amino-acid chain: Putative transcription factor YdeB (153 aa).

This sequence belongs to the CarD family.

The sequence is that of Putative transcription factor YdeB (ydeB) from Bacillus subtilis (strain 168).